We begin with the raw amino-acid sequence, 1551 residues long: Serine/threonine-protein kinase MRCK gamma (1551 aa).

The Protein kinase domain maps to 71 to 337 (FEILKVIGRG…LDDFRKHPFF (267 aa)). ATP is bound by residues 77–85 (IGRGAFGEV) and lysine 100. Catalysis depends on aspartate 195, which acts as the Proton acceptor. Serine 216 and serine 228 each carry phosphoserine; by autocatalysis. Threonine 234 carries the phosphothreonine; by autocatalysis modification. The 71-residue stretch at 338-408 (EGVDWERLAT…TSGSPFDVQS (71 aa)) folds into the AGC-kinase C-terminal domain. 2 coiled-coil regions span residues 442 to 675 (QPQE…TESN) and 729 to 801 (KARR…QARG). Residues 578 to 605 (QESSQAKTVHAAPETNGIGSPEGQSQEA) form a disordered region. Positions 820-886 (TEKDSAKDPG…SHTLRPRSFP (67 aa)) are disordered. The span at 839–849 (AEAELRPEGRR) shows a compositional bias: basic and acidic residues. The Phorbol-ester/DAG-type zinc-finger motif lies at 877 to 926 (SHTLRPRSFPSPTKCLRCTSLMLGLGRQGLGCDTCGYFCHSACASQAPPC). The region spanning 946-1065 (GTAYEGFLSV…WLQVLGELQR (120 aa)) is the PH domain. Residues 1091–1365 (LPHALCAAVI…RPLNPEGSLF (275 aa)) enclose the CNH domain. A CRIB domain is found at 1436–1449 (ISPPTNFNHLVHVG). The tract at residues 1441–1551 (NFNHLVHVGP…PPDPESESSP (111 aa)) is disordered. The segment covering 1455 to 1468 (PNTRDGTRAQEQKS) has biased composition (basic and acidic residues). Serine 1481 is modified (phosphoserine). A compositionally biased stretch (polar residues) spans 1511–1527 (TSLSSESVSCPQGSLSP).

It belongs to the protein kinase superfamily. AGC Ser/Thr protein kinase family. DMPK subfamily. As to quaternary structure, homodimer and homotetramer via the coiled coil regions. Interacts tightly with GTP-bound but not GDP-bound CDC42. Mg(2+) serves as cofactor.

It is found in the cytoplasm. It catalyses the reaction L-seryl-[protein] + ATP = O-phospho-L-seryl-[protein] + ADP + H(+). The catalysed reaction is L-threonyl-[protein] + ATP = O-phospho-L-threonyl-[protein] + ADP + H(+). Maintained in an inactive, closed conformation by an interaction between the kinase domain and the negative autoregulatory C-terminal coiled-coil region. Agonist binding to the phorbol ester binding site disrupts this, releasing the kinase domain to allow N-terminus-mediated dimerization and kinase activation by transautophosphorylation. May act as a downstream effector of CDC42 in cytoskeletal reorganization. Contributes to the actomyosin contractility required for cell invasion, through the regulation of MYPT1 and thus MLC2 phosphorylation. This is Serine/threonine-protein kinase MRCK gamma from Mus musculus (Mouse).